The sequence spans 95 residues: MNTKLTVLCFLGIVTIVSCGWMSEKKVQGILDKKLPEGIIRNAAKAIVHKMAKNQFGCFANVDVKGDCKRHCKAEDKEGICHGTKCKCGVPISYL.

The signal sequence occupies residues methionine 1–cysteine 19. Residues glutamine 55–tyrosine 94 form the BetaSPN-type CS-alpha/beta domain. 3 cysteine pairs are disulfide-bonded: cysteine 58–cysteine 81, cysteine 68–cysteine 86, and cysteine 72–cysteine 88.

It belongs to the long chain scorpion toxin family. Class 3 subfamily. As to expression, expressed by the venom gland.

The protein resides in the secreted. Has antibacterial activity against B.subtilis, but not against S.aureus. Also has hemolytic and cytolytic activities. Since cell lysis occurs at the tested concentrations, observation of activity on potassium channels is impossible. Functionally, blocks Kv1.1/KCNA1 (IC(50)=185 nM) potassium channels. Shows a weak hemolytic activity. The sequence is that of Hge-scorpine from Hoffmannihadrurus gertschi (Scorpion).